Here is a 932-residue protein sequence, read N- to C-terminus: Serotype-specific antigen 1 (932 aa).

Residues 1–24 (MYKIKHSFNKTLIAISISSFLSIA) form the signal peptide. The region spanning 25-407 (YATESIENPQ…WGLINLKKAV (383 aa)) is the Peptidase S8 domain. Residues D58, H116, and S351 each act as charge relay system in the active site. Residues 669–932 (HTPLQTTVWA…PIWLESKCWL (264 aa)) enclose the Autotransporter domain.

It belongs to the peptidase S8 family.

It localises to the cell outer membrane. In Mannheimia haemolytica (Pasteurella haemolytica), this protein is Serotype-specific antigen 1 (ssa1).